The chain runs to 831 residues: Cadherin-related family member 3 (831 aa).

The first 19 residues, 1–19, serve as a signal peptide directing secretion; the sequence is MQGAVIVLVLFGITSGGEA. Residues 20 to 711 lie on the Extracellular side of the membrane; that stretch reads LHLLHLPATS…VYSTSAWYVP (692 aa). 6 Cadherin domains span residues 24–132, 136–236, 237–344, 346–466, 462–570, and 567–693; these read HLPA…PPQF, LAQG…TPRF, TSPR…NPAT, RKLT…RPSY, ERPS…TPNF, and TPNF…RPRI. 3 N-linked (GlcNAc...) asparagine glycosylation sites follow: Asn47, Asn186, and Asn257. A helical membrane pass occupies residues 712-732; it reads FIVTLGSILLLGLLGSLMVLL. The Cytoplasmic portion of the chain corresponds to 733–831; it reads SKAVYRHCSS…EAPVPKHTGR (99 aa). 2 disordered regions span residues 743–763 and 798–831; these read TTRR…MNRE and RWKG…HTGR. Residues 749 to 763 show a composition bias toward basic and acidic residues; it reads KPLTKKRDTKRMNRE. Residues 805–817 are compositionally biased toward polar residues; the sequence is QLPNWPEPSTQHR.

The protein localises to the cell membrane. In terms of biological role, cadherins are calcium-dependent cell adhesion proteins. They preferentially interact with themselves in a homophilic manner in connecting cells; cadherins may thus contribute to the sorting of heterogeneous cell types. The polypeptide is Cadherin-related family member 3 (Cdhr3) (Mus musculus (Mouse)).